The following is a 1328-amino-acid chain: ABC transporter C family member 7 (1328 aa).

An ABC transmembrane type-1 1 domain is found at 104–389 (HKTSIIVQIF…LPQAIQRLLS (286 aa)). A run of 6 helical transmembrane segments spans residues 112–132 (IFSA…ILYV), 140–160 (SFLV…FLSI), 224–244 (LILL…CWTI), 245–265 (GYSG…STFL), 287–307 (ISEM…LFFI), and 333–353 (MVVQ…YTLI). The 222-residue stretch at 457–678 (IELVNNDSIE…FDFESIMKTK (222 aa)) folds into the ABC transporter 1 domain. 490-497 (GVVGSGKS) contacts ATP. Low complexity predominate over residues 684–695 (LNNSNNNNNNNN). The tract at residues 684–708 (LNNSNNNNNNNNNKEEEEDVENLEK) is disordered. 5 helical membrane passes run 762–782 (FIFF…FLLF), 802–822 (DSFY…FLGI), 894–914 (VLMM…LALF), 988–1008 (IGIK…FFSL), and 1014–1034 (GLSV…NWCI). Residues 765 to 1046 (FFTMIMMYII…YIEFSMKMSS (282 aa)) form the ABC transmembrane type-1 2 domain. Residues 1083–1316 (IQFKNVEIKY…INNQNSKFKK (234 aa)) enclose the ABC transporter 2 domain. An ATP-binding site is contributed by 1117–1124 (GKSGSGKS).

This sequence belongs to the ABC transporter superfamily. ABCC family. Conjugate transporter (TC 3.A.1.208) subfamily.

The protein resides in the membrane. The chain is ABC transporter C family member 7 (abcC7) from Dictyostelium discoideum (Social amoeba).